The primary structure comprises 201 residues: Peptidyl-tRNA hydrolase (201 aa).

Residue Tyr-17 coordinates tRNA. The Proton acceptor role is filled by His-22. The tRNA site is built by Phe-76, Asn-78, and Asn-124.

The protein belongs to the PTH family. Monomer.

It is found in the cytoplasm. The catalysed reaction is an N-acyl-L-alpha-aminoacyl-tRNA + H2O = an N-acyl-L-amino acid + a tRNA + H(+). Functionally, hydrolyzes ribosome-free peptidyl-tRNAs (with 1 or more amino acids incorporated), which drop off the ribosome during protein synthesis, or as a result of ribosome stalling. Its function is as follows. Catalyzes the release of premature peptidyl moieties from peptidyl-tRNA molecules trapped in stalled 50S ribosomal subunits, and thus maintains levels of free tRNAs and 50S ribosomes. This Oleidesulfovibrio alaskensis (strain ATCC BAA-1058 / DSM 17464 / G20) (Desulfovibrio alaskensis) protein is Peptidyl-tRNA hydrolase.